We begin with the raw amino-acid sequence, 156 residues long: Small ribosomal subunit protein uS7 (156 aa).

It belongs to the universal ribosomal protein uS7 family. Part of the 30S ribosomal subunit. Contacts proteins S9 and S11.

Functionally, one of the primary rRNA binding proteins, it binds directly to 16S rRNA where it nucleates assembly of the head domain of the 30S subunit. Is located at the subunit interface close to the decoding center, probably blocks exit of the E-site tRNA. This chain is Small ribosomal subunit protein uS7, found in Thermodesulfovibrio yellowstonii (strain ATCC 51303 / DSM 11347 / YP87).